The chain runs to 385 residues: uncharacterized protein (385 aa).

Transmembrane regions (helical) follow at residues Ile17 to Thr37, Thr72 to Leu92, Trp107 to Thr127, Ile155 to Ile175, Trp191 to Leu211, Ala295 to Leu315, Ile326 to Asn346, and Ile354 to Phe374.

The protein localises to the membrane. This is an uncharacterized protein from Mycoplasma capricolum subsp. capricolum (strain California kid / ATCC 27343 / NCTC 10154).